A 716-amino-acid polypeptide reads, in one-letter code: Inhibitor of nuclear factor kappa-B kinase subunit epsilon (716 aa).

One can recognise a Protein kinase domain in the interval tryptophan 9–serine 315. Leucine 15–valine 23 is a binding site for ATP. Lysine 30 is covalently cross-linked (Glycyl lysine isopeptide (Lys-Gly) (interchain with G-Cter in ubiquitin)). Residue lysine 38 participates in ATP binding. The active-site Proton acceptor is the aspartate 135. A Phosphoserine; by autocatalysis and IKKB modification is found at serine 172. A Glycyl lysine isopeptide (Lys-Gly) (interchain with G-Cter in SUMO1) cross-link involves residue lysine 231. Residues serine 383–glutamate 647 are interaction with DDX3X. Lysine 401 participates in a covalent cross-link: Glycyl lysine isopeptide (Lys-Gly) (interchain with G-Cter in ubiquitin). Residues glutamine 436–threonine 457 are leucine-zipper. Threonine 501 bears the Phosphothreonine mark. A Phosphoserine modification is found at serine 664.

It belongs to the protein kinase superfamily. Ser/Thr protein kinase family. I-kappa-B kinase subfamily. Homodimer. Interacts with MAVS/IPS1. Interacts (via protein kinase domain) with TTLL12 (via N-terminus); the interaction prevents MAVS binding to IKBKE. Interacts with the adapter proteins AZI2/NAP1, TANK and TBKBP1/SINTBAD. Interacts with SIKE1. Interacts with TICAM1/TRIF, IRF3 and RIGI; interactions are disrupted by the interaction between IKBKE and SIKE1. Interacts with TOPORS; induced by DNA damage. Interacts with CYLD. Interacts (when polyubiquitinated) with IKBKB, IKBKG and MYD88. Interacts with IFIH1. Interacts with DDX3X; the interaction may be induced upon virus infection. Interacts with TRIM6 (via SPRY box). Interacts with unanchored K48-linked polyubiquitin chains; this leads to IKBKE activation. Interacts with TBK1. Interacts with FKBP5. As to quaternary structure, (Microbial infection) Interacts (via Protein kinase domain) with arenavirus protein N; the interaction inhibits IKBKE kinase function. In terms of assembly, (Microbial infection) Interacts with Ebola virus protein VP35; the interaction leads to inhibition of cellular antiviral response by blocking necessary interactions between the IKBKE and MAVS/IPS as well as its substrates IRF3 and IRF7. (Microbial infection) Interacts with Severe fever with thrombocytopenia virus (SFTSV) NSs; this interaction this interaction sequesters IKBKE in NSs-induced cytoplasmic inclusion bodies thereby inhibiting the IFN responses. As to quaternary structure, (Microbial infection) Interacts with human T-cell leukemia virus 1/HTLV-1 protein HBZ. In terms of assembly, (Microbial infection) Interacts with Epstein-Barr virus (EBV) protein NEC2/BFRF1; this interaction inhibits IKBKE kinase activity and IRF3 nuclear translocation. Autophosphorylated and phosphorylated by IKBKB/IKKB. Phosphorylation at Ser-172 is enhanced by the interaction with DDX3X. Phosphorylated at Thr-501 upon IFN activation. Post-translationally, sumoylation by TOPORS upon DNA damage is required for protection of cells against DNA damage-induced cell death. Desumoylated by SENP1. In terms of processing, 'Lys-63'-linked polyubiquitinated at Lys-30 and Lys-401 by TRAF2:BIRC2 and TRAF2:BIRC3 complexes. Ubiquitination is induced by LPS, TNFA and interleukin-1 and required for full kinase activity and KF-kappa-B pathway activation. As to expression, highly expressed in spleen followed by thymus, peripheral blood leukocytes, pancreas, placenta. Weakly expressed in lung, kidney, prostate, ovary and colon.

The protein resides in the cytoplasm. It localises to the nucleus. It is found in the PML body. The enzyme catalyses L-seryl-[I-kappa-B protein] + ATP = O-phospho-L-seryl-[I-kappa-B protein] + ADP + H(+). Functionally, serine/threonine kinase that plays an essential role in regulating inflammatory responses to viral infection, through the activation of the type I IFN, NF-kappa-B and STAT signaling. Also involved in TNFA and inflammatory cytokines, like Interleukin-1, signaling. Following activation of viral RNA sensors, such as RIG-I-like receptors, associates with DDX3X and phosphorylates interferon regulatory factors (IRFs), IRF3 and IRF7, as well as DDX3X. This activity allows subsequent homodimerization and nuclear translocation of the IRF3 leading to transcriptional activation of pro-inflammatory and antiviral genes including IFNB. In order to establish such an antiviral state, IKBKE forms several different complexes whose composition depends on the type of cell and cellular stimuli. Thus, several scaffolding molecules including IPS1/MAVS, TANK, AZI2/NAP1 or TBKBP1/SINTBAD can be recruited to the IKBKE-containing-complexes. Activated by polyubiquitination in response to TNFA and interleukin-1, regulates the NF-kappa-B signaling pathway through, at least, the phosphorylation of CYLD. Phosphorylates inhibitors of NF-kappa-B thus leading to the dissociation of the inhibitor/NF-kappa-B complex and ultimately the degradation of the inhibitor. In addition, is also required for the induction of a subset of ISGs which displays antiviral activity, may be through the phosphorylation of STAT1 at 'Ser-708'. Phosphorylation of STAT1 at 'Ser-708' also seems to promote the assembly and DNA binding of ISGF3 (STAT1:STAT2:IRF9) complexes compared to GAF (STAT1:STAT1) complexes, in this way regulating the balance between type I and type II IFN responses. Protects cells against DNA damage-induced cell death. Also plays an important role in energy balance regulation by sustaining a state of chronic, low-grade inflammation in obesity, wich leads to a negative impact on insulin sensitivity. Phosphorylates AKT1. This Homo sapiens (Human) protein is Inhibitor of nuclear factor kappa-B kinase subunit epsilon (IKBKE).